The primary structure comprises 412 residues: Gamma-glutamyl phosphate reductase (412 aa).

The protein belongs to the gamma-glutamyl phosphate reductase family.

It localises to the cytoplasm. It carries out the reaction L-glutamate 5-semialdehyde + phosphate + NADP(+) = L-glutamyl 5-phosphate + NADPH + H(+). It functions in the pathway amino-acid biosynthesis; L-proline biosynthesis; L-glutamate 5-semialdehyde from L-glutamate: step 2/2. Catalyzes the NADPH-dependent reduction of L-glutamate 5-phosphate into L-glutamate 5-semialdehyde and phosphate. The product spontaneously undergoes cyclization to form 1-pyrroline-5-carboxylate. The chain is Gamma-glutamyl phosphate reductase from Lactiplantibacillus plantarum (strain ATCC BAA-793 / NCIMB 8826 / WCFS1) (Lactobacillus plantarum).